We begin with the raw amino-acid sequence, 78 residues long: Small ribosomal subunit protein bS18 (78 aa).

The protein belongs to the bacterial ribosomal protein bS18 family. Part of the 30S ribosomal subunit. Forms a tight heterodimer with protein bS6.

In terms of biological role, binds as a heterodimer with protein bS6 to the central domain of the 16S rRNA, where it helps stabilize the platform of the 30S subunit. In Lacticaseibacillus casei (strain BL23) (Lactobacillus casei), this protein is Small ribosomal subunit protein bS18.